The sequence spans 320 residues: O(6)-methylguanine-induced apoptosis 2 (320 aa).

Residues 46-91 (LNESPGPGSYLSHSPAEGCSPSFSKRGTGSFASKGGRVPRSFQRLS) are disordered. STPGR repeat units lie at residues 49–82 (SPGP…KGGR), 91–103 (SPGP…QMSL), 132–163 (NPAP…KTRR), 173–192 (GPSP…SPQA), 213–233 (PGPG…TVLP), 254–266 (PGPG…NYNR), and 294–305 (PGPGFYEPTVLS). The span at 66-76 (PSFSKRGTGSF) shows a compositional bias: polar residues. The segment at 207–226 (PVRNNIPGPGTYNPHQPPEP) is disordered.

The protein belongs to the STPG1 family.

It is found in the cytoplasm. The protein resides in the nucleus. Its function is as follows. May positively contribute to the induction of apoptosis triggered by O(6)-methylguanine. The chain is O(6)-methylguanine-induced apoptosis 2 (stpg1) from Danio rerio (Zebrafish).